The chain runs to 295 residues: MTESLDLVIITGMSGAGKTVAMQAFEDLGYFCVDNMPPALLPKFWELVKESGKITKVALVVDLRSRAFYDQIIDMLANLDNNAYVHSRILFLDATDEELVSRYKETRRSHPLAMEGRLMDGIKKERALLTELRNRAQVVIDTTTLSPRQLREKIFLNFKESGSQPAFHIEVMSFGFKYGLPIDADIVMDVRFLPNPFYIKDYRPKTGLDPEVYNYVMDNEDAESFYNKFYDLLSEIMPKYKAEGKTSVTIAIGCTGGQHRSVAFAERIGKAFSDAYAVDITHRDIKKHKETVNRS.

12-19 (GMSGAGKT) serves as a coordination point for ATP. Position 62–65 (62–65 (DLRS)) interacts with GTP.

This sequence belongs to the RapZ-like family.

In terms of biological role, displays ATPase and GTPase activities. This Lacticaseibacillus paracasei (strain ATCC 334 / BCRC 17002 / CCUG 31169 / CIP 107868 / KCTC 3260 / NRRL B-441) (Lactobacillus paracasei) protein is Nucleotide-binding protein LSEI_0959.